A 274-amino-acid chain; its full sequence is 23S rRNA (adenosine(1067)-2'-O)-methyltransferase (274 aa).

S-adenosyl-L-methionine-binding positions include Arg-165, Leu-195, 218 to 220, 238 to 240, and 247 to 252; these read GSE, IPM, and LNVSVS.

It belongs to the class IV-like SAM-binding methyltransferase superfamily. RNA methyltransferase TsnR/AvirB family. As to quaternary structure, homodimer.

It carries out the reaction adenosine(1067) in 23S rRNA + S-adenosyl-L-methionine = 2'-O-methyladenosine(1067) in 23S rRNA + S-adenosyl-L-homocysteine + H(+). Functionally, specifically methylates the adenosine-1067 in 23S ribosomal RNA. Confers resistance to antibiotic nosiheptide. This Streptomyces actuosus protein is 23S rRNA (adenosine(1067)-2'-O)-methyltransferase.